A 113-amino-acid chain; its full sequence is Histidine triad nucleotide-binding protein (113 aa).

Zn(2+) contacts are provided by Cys-5 and Cys-8. An HIT domain is found at 6–113 (IFCKIAQKQI…GGKKLAWDKL (108 aa)). An AMP-binding site is contributed by Asp-31. His-47 provides a ligand contact to Zn(2+). 3 residues coordinate AMP: Asn-86, Gly-92, and Thr-94. His-97 is a Zn(2+) binding site. The Histidine triad motif signature appears at 97–101 (HIHFH). Residues His-99 and His-101 each contribute to the AMP site. The active-site Tele-AMP-histidine intermediate is the His-99.

The protein belongs to the HINT family.

The protein resides in the nucleus. The protein localises to the cytoplasm. The catalysed reaction is adenosine 5'-phosphoramidate + H2O = AMP + NH4(+). In terms of biological role, hydrolyzes purine nucleotide phosphoramidates with a single phosphate group, including adenosine 5'monophosphoramidate (AMP-NH2), adenosine 5'monophosphomorpholidate (AMP-morpholidate) and guanosine 5'monophosphomorpholidate (GMP-morpholidate). Hydrolyzes lysyl-AMP (AMP-N-epsilon-(N-alpha-acetyl lysine methyl ester)) generated by lysine tRNA ligase, as well as Met-AMP, His-AMP and Asp-AMP, lysyl-GMP (GMP-N-epsilon-(N-alpha-acetyl lysine methyl ester)) and AMP-N-alanine methyl ester. May also function as scaffolding protein that mediates protein-protein interactions. The sequence is that of Histidine triad nucleotide-binding protein from Entamoeba histolytica (strain ATCC 30459 / HM-1:IMSS / ABRM).